Reading from the N-terminus, the 312-residue chain is Olfactory receptor 6C74 (312 aa).

Residues Met-1–Val-23 are Extracellular-facing. Residue Asn-3 is glycosylated (N-linked (GlcNAc...) asparagine). A helical membrane pass occupies residues Ile-24–Ile-44. Residues Thr-45–Asn-63 are Cytoplasmic-facing. A helical membrane pass occupies residues Phe-64 to Ala-84. Residues Thr-85–Cys-95 lie on the Extracellular side of the membrane. An intrachain disulfide couples Cys-95 to Cys-177. The chain crosses the membrane as a helical span at residues Ala-96–Met-116. At Ser-117 to Ser-140 the chain is on the cytoplasmic side. The chain crosses the membrane as a helical span at residues Leu-141–Gly-161. Over Leu-162 to Glu-194 the chain is Extracellular. The helical transmembrane segment at Leu-195–Ser-215 threads the bilayer. At Tyr-216–Ser-237 the chain is on the cytoplasmic side. The chain crosses the membrane as a helical span at residues Thr-238–Val-258. At Lys-259–Asn-269 the chain is on the extracellular side. A helical membrane pass occupies residues Lys-270–Leu-290. The Cytoplasmic segment spans residues Arg-291–Lys-312.

This sequence belongs to the G-protein coupled receptor 1 family.

It localises to the cell membrane. Its function is as follows. Odorant receptor. This Homo sapiens (Human) protein is Olfactory receptor 6C74 (OR6C74).